The sequence spans 483 residues: ATP synthase subunit beta (483 aa).

Gly167–Thr174 serves as a coordination point for ATP.

The protein belongs to the ATPase alpha/beta chains family. In terms of assembly, F-type ATPases have 2 components, CF(1) - the catalytic core - and CF(0) - the membrane proton channel. CF(1) has five subunits: alpha(3), beta(3), gamma(1), delta(1), epsilon(1). CF(0) has three main subunits: a(1), b(2) and c(9-12). The alpha and beta chains form an alternating ring which encloses part of the gamma chain. CF(1) is attached to CF(0) by a central stalk formed by the gamma and epsilon chains, while a peripheral stalk is formed by the delta and b chains.

It is found in the cell membrane. The catalysed reaction is ATP + H2O + 4 H(+)(in) = ADP + phosphate + 5 H(+)(out). In terms of biological role, produces ATP from ADP in the presence of a proton gradient across the membrane. The catalytic sites are hosted primarily by the beta subunits. This chain is ATP synthase subunit beta, found in Paenarthrobacter aurescens (strain TC1).